A 327-amino-acid chain; its full sequence is tRNA dimethylallyltransferase (327 aa).

Position 14-21 (14-21) interacts with ATP; sequence GPTASGKT. 16–21 provides a ligand contact to substrate; sequence TASGKT. 2 interaction with substrate tRNA regions span residues 39–42 and 163–167; these read DSAL and QRIQR.

This sequence belongs to the IPP transferase family. As to quaternary structure, monomer. The cofactor is Mg(2+).

It carries out the reaction adenosine(37) in tRNA + dimethylallyl diphosphate = N(6)-dimethylallyladenosine(37) in tRNA + diphosphate. Functionally, catalyzes the transfer of a dimethylallyl group onto the adenine at position 37 in tRNAs that read codons beginning with uridine, leading to the formation of N6-(dimethylallyl)adenosine (i(6)A). The protein is tRNA dimethylallyltransferase of Xanthomonas axonopodis pv. citri (strain 306).